Here is a 469-residue protein sequence, read N- to C-terminus: GDNF family receptor alpha-1 (469 aa).

A signal peptide spans 1 to 27; sequence MFLALLYLALPLADVLLSAEVSGLPGG. 3 repeat units span residues 28–116, 149–237, and 238–341. Cysteine 39 and cysteine 45 are oxidised to a cystine. N-linked (GlcNAc...) asparagine glycosylation is found at asparagine 62 and asparagine 163. Cystine bridges form between cysteine 153–cysteine 213, cysteine 160–cysteine 166, cysteine 177–cysteine 191, cysteine 186–cysteine 232, cysteine 215–cysteine 220, cysteine 242–cysteine 312, cysteine 249–cysteine 255, cysteine 266–cysteine 284, cysteine 276–cysteine 336, and cysteine 314–cysteine 324. Residues asparagine 346 and asparagine 405 are each glycosylated (N-linked (GlcNAc...) asparagine). Serine 430 carries the GPI-anchor amidated serine lipid modification. Residues 431–469 constitute a propeptide, removed in mature form; sequence HISSENSFALPTSFYPSTPLILMTIALSLFLFLSSSVVL.

It belongs to the GDNFR family. Interacts with GDNF ligand and RET: forms a 2:2:2 ternary complex composed of GDNF ligand, GFRA1 and RET receptor.

It localises to the cell membrane. It is found in the golgi apparatus. Its subcellular location is the trans-Golgi network. The protein resides in the endosome. The protein localises to the multivesicular body. Functionally, coreceptor for GDNF, a neurotrophic factor that enhances survival and morphological differentiation of dopaminergic neurons and increases their high-affinity dopamine uptake. GDNF-binding leads to autophosphorylation and activation of the RET receptor. This is GDNF family receptor alpha-1 (GFRA1) from Gallus gallus (Chicken).